Consider the following 295-residue polypeptide: MRHPDFPVPPRIDAFASWEASLRLAFARRGGRTVLASCRHRGPLRVQKALYPEGEGVCHVVLLHPPAGIAGGDVLDIGIELGAEAHAVLTTPGATKWYKSPGRTAMQQVAIRLDAGARLDWLPQENIVFNQARPVIDLTLDLAPGAAAIGWDITMLGRHAAGESWQEGRIAMHTRLRCEGQPLWIESTAFDAQSPVLGATTGMAGFHVVGTLWAVGAGATEALAETLAEQLPYRDDLRAGVTCLTQDAPGRPSVLLLRVLARRPEDARALLSQTWLALREPIHGVAGRPLRLWAT.

The protein belongs to the UreD family. UreD, UreF and UreG form a complex that acts as a GTP-hydrolysis-dependent molecular chaperone, activating the urease apoprotein by helping to assemble the nickel containing metallocenter of UreC. The UreE protein probably delivers the nickel.

It is found in the cytoplasm. Functionally, required for maturation of urease via the functional incorporation of the urease nickel metallocenter. This Ralstonia nicotianae (strain ATCC BAA-1114 / GMI1000) (Ralstonia solanacearum) protein is Urease accessory protein UreD.